Consider the following 227-residue polypeptide: UPF0173 metal-dependent hydrolase STK_14180 (227 aa).

The protein belongs to the UPF0173 family.

In Sulfurisphaera tokodaii (strain DSM 16993 / JCM 10545 / NBRC 100140 / 7) (Sulfolobus tokodaii), this protein is UPF0173 metal-dependent hydrolase STK_14180.